Here is a 948-residue protein sequence, read N- to C-terminus: Phosphoenolpyruvate carboxylase (948 aa).

Residues histidine 138 and lysine 610 contribute to the active site.

Belongs to the PEPCase type 1 family. The cofactor is Mg(2+).

The enzyme catalyses oxaloacetate + phosphate = phosphoenolpyruvate + hydrogencarbonate. In terms of biological role, forms oxaloacetate, a four-carbon dicarboxylic acid source for the tricarboxylic acid cycle. The protein is Phosphoenolpyruvate carboxylase of Streptococcus gordonii (strain Challis / ATCC 35105 / BCRC 15272 / CH1 / DL1 / V288).